A 147-amino-acid chain; its full sequence is Phosphoribosyl-AMP cyclohydrolase (147 aa).

Asp91 lines the Mg(2+) pocket. Position 92 (Cys92) interacts with Zn(2+). The Mg(2+) site is built by Asp93 and Asp95. Residues Cys109 and Cys116 each contribute to the Zn(2+) site.

This sequence belongs to the PRA-CH family. In terms of assembly, homodimer. Requires Mg(2+) as cofactor. It depends on Zn(2+) as a cofactor.

Its subcellular location is the cytoplasm. The catalysed reaction is 1-(5-phospho-beta-D-ribosyl)-5'-AMP + H2O = 1-(5-phospho-beta-D-ribosyl)-5-[(5-phospho-beta-D-ribosylamino)methylideneamino]imidazole-4-carboxamide. It functions in the pathway amino-acid biosynthesis; L-histidine biosynthesis; L-histidine from 5-phospho-alpha-D-ribose 1-diphosphate: step 3/9. In terms of biological role, catalyzes the hydrolysis of the adenine ring of phosphoribosyl-AMP. This is Phosphoribosyl-AMP cyclohydrolase from Rhodopseudomonas palustris (strain BisA53).